Consider the following 607-residue polypeptide: Pyruvate decarboxylase 2 (607 aa).

A disordered region spans residues 1–22; sequence MDTKIGSIDACNPTNHDIGGPP. 2 residues coordinate substrate: D69 and H156. A thiamine pyrophosphate binding region spans residues 434–516; that stretch reads DSWFNCQKLK…FLINNGGYTI (83 aa). Residues D484, N511, and G513 each contribute to the Mg(2+) site. Position 517 (E517) interacts with substrate.

It belongs to the TPP enzyme family. As to quaternary structure, homotetramer. The cofactor is a metal cation. Thiamine diphosphate serves as cofactor. As to expression, expressed at low levels in roots, shoots, flowers, siliques and seeds.

The enzyme catalyses a 2-oxocarboxylate + H(+) = an aldehyde + CO2. This chain is Pyruvate decarboxylase 2 (PDC2), found in Arabidopsis thaliana (Mouse-ear cress).